The sequence spans 549 residues: Chaperonin GroEL (549 aa).

ATP-binding positions include 29–32 (TAGP), K50, 86–90 (DGTTT), G417, and D499.

The protein belongs to the chaperonin (HSP60) family. In terms of assembly, forms a cylinder of 14 subunits composed of two heptameric rings stacked back-to-back. Interacts with the co-chaperonin GroES.

The protein resides in the cytoplasm. It catalyses the reaction ATP + H2O + a folded polypeptide = ADP + phosphate + an unfolded polypeptide.. Functionally, together with its co-chaperonin GroES, plays an essential role in assisting protein folding. The GroEL-GroES system forms a nano-cage that allows encapsulation of the non-native substrate proteins and provides a physical environment optimized to promote and accelerate protein folding. This is Chaperonin GroEL from Anaplasma marginale (strain Florida).